A 162-amino-acid polypeptide reads, in one-letter code: Caveolin-2 (162 aa).

Topologically, residues 1 to 86 (MGLEKEKLEC…FELVKFIFYR (86 aa)) are cytoplasmic. Residues 87–107 (LLTTLLAVPAAFILGVVFGVL) constitute an intramembrane region (helical). At 108-162 (SCIHIWLVMPVTRSFLMLLPSIQVVWKSVTDMFITPLFHSMGRSLSSIQVRTSDT) the chain is on the cytoplasmic side.

Belongs to the caveolin family. As to quaternary structure, homooligomer.

It is found in the golgi apparatus membrane. The protein resides in the cell membrane. The protein localises to the membrane. Its subcellular location is the caveola. Functionally, may act as a scaffolding protein within caveolar membranes. Interacts directly with G-protein alpha subunits and can functionally regulate their activity. This chain is Caveolin-2 (cav2), found in Takifugu rubripes (Japanese pufferfish).